Reading from the N-terminus, the 447-residue chain is Asparagine--tRNA ligase (447 aa).

It belongs to the class-II aminoacyl-tRNA synthetase family. Homodimer.

The protein localises to the cytoplasm. It catalyses the reaction tRNA(Asn) + L-asparagine + ATP = L-asparaginyl-tRNA(Asn) + AMP + diphosphate + H(+). This Lactococcus lactis subsp. lactis (strain IL1403) (Streptococcus lactis) protein is Asparagine--tRNA ligase.